The primary structure comprises 386 residues: Phosphoglycerate kinase (386 aa).

Substrate contacts are provided by residues D21–N23, R36, H59–R62, R113, and R146. Residues K197, E313, and G339–T342 contribute to the ATP site.

The protein belongs to the phosphoglycerate kinase family. As to quaternary structure, monomer.

The protein localises to the cytoplasm. It catalyses the reaction (2R)-3-phosphoglycerate + ATP = (2R)-3-phospho-glyceroyl phosphate + ADP. It functions in the pathway carbohydrate degradation; glycolysis; pyruvate from D-glyceraldehyde 3-phosphate: step 2/5. The polypeptide is Phosphoglycerate kinase (Serratia proteamaculans (strain 568)).